An 82-amino-acid chain; its full sequence is RNA-binding protein Hfq (82 aa).

A Sm domain is found at 11-71 (DTFLNHVRKT…ISTIMPGAPI (61 aa)).

The protein belongs to the Hfq family. Homohexamer.

RNA chaperone that binds small regulatory RNA (sRNAs) and mRNAs to facilitate mRNA translational regulation in response to envelope stress, environmental stress and changes in metabolite concentrations. Also binds with high specificity to tRNAs. This chain is RNA-binding protein Hfq, found in Bradyrhizobium diazoefficiens (strain JCM 10833 / BCRC 13528 / IAM 13628 / NBRC 14792 / USDA 110).